We begin with the raw amino-acid sequence, 477 residues long: Ankyrin repeat, SAM and basic leucine zipper domain-containing protein 1 (477 aa).

Phosphoserine is present on residues Ser-17, Ser-18, and Ser-20. ANK repeat units follow at residues 46 to 76 (EKKE…SVDA), 80 to 109 (YGWT…NASF), 112 to 146 (DKQT…DPNV), 150 to 179 (RLMT…EVNT), 183 to 212 (NGYT…NKML), and 216 to 245 (DGKL…PLEG). The 63-residue stretch at 274–336 (SYAAFGDLEV…KILTALKELE (63 aa)) folds into the SAM domain.

In terms of assembly, interacts with DDX4, PIWIL1, RANBP9 and TDRD1.

The protein resides in the cytoplasm. In terms of biological role, plays a central role during spermatogenesis by repressing transposable elements and preventing their mobilization, which is essential for the germline integrity. Acts via the piRNA metabolic process, which mediates the repression of transposable elements during meiosis by forming complexes composed of piRNAs and Piwi proteins and governs the methylation and subsequent repression of transposons. Its association with pi-bodies suggests a participation in the primary piRNAs metabolic process. Required prior to the pachytene stage to facilitate the production of multiple types of piRNAs, including those associated with repeats involved in the regulation of retrotransposons. May act by mediating protein-protein interactions during germ cell maturation. The protein is Ankyrin repeat, SAM and basic leucine zipper domain-containing protein 1 (ASZ1) of Ateles geoffroyi (Black-handed spider monkey).